The primary structure comprises 28 residues: Putative antitoxin AF_1079 (28 aa).

It belongs to the UPF0165 family.

Possibly the antitoxin component of a type II toxin-antitoxin (TA) system. The sequence is that of Putative antitoxin AF_1079 from Archaeoglobus fulgidus (strain ATCC 49558 / DSM 4304 / JCM 9628 / NBRC 100126 / VC-16).